We begin with the raw amino-acid sequence, 299 residues long: Bifunctional protein FolD (299 aa).

Residues 169–171 (GRS), Ser-194, and Ile-235 each bind NADP(+).

The protein belongs to the tetrahydrofolate dehydrogenase/cyclohydrolase family. Homodimer.

It carries out the reaction (6R)-5,10-methylene-5,6,7,8-tetrahydrofolate + NADP(+) = (6R)-5,10-methenyltetrahydrofolate + NADPH. The enzyme catalyses (6R)-5,10-methenyltetrahydrofolate + H2O = (6R)-10-formyltetrahydrofolate + H(+). Its pathway is one-carbon metabolism; tetrahydrofolate interconversion. Its function is as follows. Catalyzes the oxidation of 5,10-methylenetetrahydrofolate to 5,10-methenyltetrahydrofolate and then the hydrolysis of 5,10-methenyltetrahydrofolate to 10-formyltetrahydrofolate. The polypeptide is Bifunctional protein FolD (Nostoc sp. (strain PCC 7120 / SAG 25.82 / UTEX 2576)).